The following is an 88-amino-acid chain: NADH-ubiquinone oxidoreductase chain 4L (88 aa).

Transmembrane regions (helical) follow at residues 22–42 and 57–77; these read IILM…LVLV and IYII…LVAY.

It belongs to the complex I subunit 4L family.

Its subcellular location is the mitochondrion membrane. The catalysed reaction is a ubiquinone + NADH + 5 H(+)(in) = a ubiquinol + NAD(+) + 4 H(+)(out). In terms of biological role, core subunit of the mitochondrial membrane respiratory chain NADH dehydrogenase (Complex I) that is believed to belong to the minimal assembly required for catalysis. Complex I functions in the transfer of electrons from NADH to the respiratory chain. The immediate electron acceptor for the enzyme is believed to be ubiquinone. In Trimorphomyces papilionaceus (Jelly fungus), this protein is NADH-ubiquinone oxidoreductase chain 4L (ND4L).